We begin with the raw amino-acid sequence, 987 residues long: Pentatricopeptide repeat-containing protein At1g06710, mitochondrial (987 aa).

The N-terminal 42 residues, methionine 1 to methionine 42, are a transit peptide targeting the mitochondrion. PPR repeat units lie at residues threonine 164 to valine 198, phenylalanine 199 to proline 233, serine 234 to methionine 268, aspartate 269 to valine 299, aspartate 301 to proline 335, asparagine 336 to proline 370, serine 371 to proline 405, glycine 406 to leucine 446, asparagine 447 to proline 481, aspartate 482 to alanine 516, aspartate 517 to proline 551, asparagine 552 to proline 586, asparagine 587 to proline 621, asparagine 638 to proline 672, asparagine 673 to alanine 707, threonine 708 to proline 742, asparagine 743 to proline 777, asparagine 778 to proline 812, asparagine 813 to threonine 847, phenylalanine 881 to leucine 915, tyrosine 918 to proline 952, and glutamate 953 to leucine 987.

This sequence belongs to the PPR family. P subfamily.

Its subcellular location is the mitochondrion. In Arabidopsis thaliana (Mouse-ear cress), this protein is Pentatricopeptide repeat-containing protein At1g06710, mitochondrial.